Reading from the N-terminus, the 144-residue chain is MNEELQNQFMALDVYNQQVDKLKEELSNIDMMIMELLRSIESMEGLKSSKEILLPLGAGAFIKAEAQNPEKIVLSVGVDVLLEKNVDDVIVDFQKSVEELEKTKELVNNQIQKTNQEIVKLRSELEKRAAAIEQRSAQMKPKTN.

The protein belongs to the prefoldin subunit alpha family. Heterohexamer of two alpha and four beta subunits.

It localises to the cytoplasm. Functionally, molecular chaperone capable of stabilizing a range of proteins. Seems to fulfill an ATP-independent, HSP70-like function in archaeal de novo protein folding. The polypeptide is Prefoldin subunit alpha (Methanococcus maripaludis (strain DSM 14266 / JCM 13030 / NBRC 101832 / S2 / LL)).